The chain runs to 1113 residues: Antigenic protein P1 (1113 aa).

A helical membrane pass occupies residues 7–27 (IIAVVAIASAIVTGVVVIVVV). N-linked (GlcNAc...) asparagine glycosylation is found at N121, N207, N225, N233, N274, N533, N576, N622, N675, N679, N730, N753, N880, N899, N907, N972, and N995. The Peptidase M60 domain maps to 159-473 (VFGQRAVAWA…SYVNMAHAFG (315 aa)). The PA14 domain maps to 648 to 800 (LDPHQVEYEV…TEESSVDVSK (153 aa)).

Its subcellular location is the membrane. The polypeptide is Antigenic protein P1 (Entamoeba histolytica (strain ATCC 30459 / HM-1:IMSS / ABRM)).